The sequence spans 663 residues: UvrABC system protein B (663 aa).

The 241-residue stretch at 31–271 folds into the Helicase ATP-binding domain; that stretch reads DNIEGGEKAQ…EQSISKIQAE (241 aa). ATP is bound at residue 44–51; the sequence is GATGTGKT. The Beta-hairpin motif lies at 97–120; the sequence is YYDYYQPEAYVPSSDTYIEKDSSV. Residues 435–601 enclose the Helicase C-terminal domain; sequence QMDDLLGEIN…TIKKDIRDLI (167 aa). The 36-residue stretch at 627–662 folds into the UVR domain; sequence QEAIKQLQKNMQEAAELLDFELAAQLRDLILELKAM.

This sequence belongs to the UvrB family. In terms of assembly, forms a heterotetramer with UvrA during the search for lesions. Interacts with UvrC in an incision complex.

The protein resides in the cytoplasm. Functionally, the UvrABC repair system catalyzes the recognition and processing of DNA lesions. A damage recognition complex composed of 2 UvrA and 2 UvrB subunits scans DNA for abnormalities. Upon binding of the UvrA(2)B(2) complex to a putative damaged site, the DNA wraps around one UvrB monomer. DNA wrap is dependent on ATP binding by UvrB and probably causes local melting of the DNA helix, facilitating insertion of UvrB beta-hairpin between the DNA strands. Then UvrB probes one DNA strand for the presence of a lesion. If a lesion is found the UvrA subunits dissociate and the UvrB-DNA preincision complex is formed. This complex is subsequently bound by UvrC and the second UvrB is released. If no lesion is found, the DNA wraps around the other UvrB subunit that will check the other stand for damage. The protein is UvrABC system protein B of Streptococcus equi subsp. zooepidemicus (strain H70).